We begin with the raw amino-acid sequence, 130 residues long: Small ribosomal subunit protein uS11 (130 aa).

The interval isoleucine 108–valine 130 is disordered.

Belongs to the universal ribosomal protein uS11 family. As to quaternary structure, part of the 30S ribosomal subunit.

Functionally, located on the platform of the 30S subunit. In Methanothermobacter thermautotrophicus (strain ATCC 29096 / DSM 1053 / JCM 10044 / NBRC 100330 / Delta H) (Methanobacterium thermoautotrophicum), this protein is Small ribosomal subunit protein uS11.